Here is a 457-residue protein sequence, read N- to C-terminus: Vasoactive intestinal polypeptide receptor 1 (457 aa).

Residues 1–30 (MRPPSPLPARWLCVLAGALAWALGPAGGQA) form the signal peptide. The Extracellular segment spans residues 31-141 (ARLQEECDYV…DEQQTMFYGS (111 aa)). Disulfide bonds link cysteine 37–cysteine 208, cysteine 50–cysteine 72, cysteine 63–cysteine 105, cysteine 86–cysteine 122, and cysteine 215–cysteine 285. 3 N-linked (GlcNAc...) asparagine glycosylation sites follow: asparagine 58, asparagine 69, and asparagine 100. A helical membrane pass occupies residues 142–166 (VKTGYTIGYGLSLATLLVATAILSL). Over 167–174 (FRKLHCTR) the chain is Cytoplasmic. A helical transmembrane segment spans residues 175–196 (NYIHMHLFISFILRAAAVFIKD). The Extracellular portion of the chain corresponds to 197–216 (LALFDSGESDQCSEGSVGCK). The chain crosses the membrane as a helical span at residues 217–241 (AAMVFFQYCVMANFFWLLVEGLYLY). At 242-254 (TLLAVSFFSERKY) the chain is on the cytoplasmic side. Residues 255–276 (FWGYILIGWGVPSTFTMVWTIA) form a helical membrane-spanning segment. Over 277–291 (RIHFEDYGCWDTINS) the chain is Extracellular. A glycan (N-linked (GlcNAc...) asparagine) is linked at asparagine 290. The helical transmembrane segment at 292 to 316 (SLWWIIKGPILTSILVNFILFICII) threads the bilayer. At 317 to 338 (RILLQKLRPPDIRKSDSSPYSR) the chain is on the cytoplasmic side. A helical transmembrane segment spans residues 339-359 (LARSTLLLIPLFGVHYIMFAF). Topologically, residues 360 to 367 (FPDNFKPE) are extracellular. The helical transmembrane segment at 368 to 391 (VKMVFELVVGSFQGFVVAILYCFL) threads the bilayer. The Cytoplasmic segment spans residues 392–457 (NGEVQAELRR…SSFQAEVSLV (66 aa)).

This sequence belongs to the G-protein coupled receptor 2 family. Interacts with ADCYAP1/PACAP; activated by both PACAP27 and PACAP38 neuropeptides. Interacts with VIP; the interaction results in VIPR1 activation. In terms of tissue distribution, in lung, HT-29 colonic epithelial cells, Raji B-lymphoblasts. Lesser extent in brain, heart, kidney, liver and placenta. Not expressed in CD4+ or CD8+ T-cells. Expressed in the T-cell lines HARRIS, HuT 78, Jurkat and SUP-T1, but not in the T-cell lines Peer, MOLT-4, HSB and YT.

It localises to the cell membrane. G protein-coupled receptor activated by the neuropeptides vasoactive intestinal peptide (VIP) and pituitary adenylate cyclase-activating polypeptide (ADCYAP1/PACAP). Binds VIP and both PACAP27 and PACAP38 bioactive peptides with the following order of ligand affinity VIP = PACAP27 &gt; PACAP38. Ligand binding causes a conformation change that triggers signaling via guanine nucleotide-binding proteins (G proteins) and modulates the activity of downstream effectors. Activates cAMP-dependent pathway. This Homo sapiens (Human) protein is Vasoactive intestinal polypeptide receptor 1.